We begin with the raw amino-acid sequence, 248 residues long: Myelin protein P0 (248 aa).

The signal sequence occupies residues 1 to 28 (MAPGAPSSSPSPILAALLFSSLVLSPVQ). Residues 29–155 (AIVVYTDKEV…VFEKVPTRYG (127 aa)) lie on the Extracellular side of the membrane. An Ig-like V-type domain is found at 30–143 (IVVYTDKEVH…DIVGKTSQVT (114 aa)). A disulfide bridge links Cys50 with Cys127. Asn122 is a glycosylation site (N-linked (GlcNAc...) (complex) asparagine). A helical membrane pass occupies residues 156–176 (VVLGAVIGGVLGVVLLALLLF). Residues 177-248 (YLIRYCWLRR…GLGESRKDKK (72 aa)) lie on the Cytoplasmic side of the membrane. Position 210 is a phosphoserine; by PKC (Ser210). The disordered stretch occupies residues 224 to 248 (DHSRSTKAASEKKTKGLGESRKDKK). Ser226 and Ser228 each carry phosphoserine. Ser233 and Ser243 each carry phosphoserine; by PKC.

This sequence belongs to the myelin P0 protein family. In terms of assembly, homodimer and homotetramer. N-glycosylated; contains sulfate-substituted glycan. As to expression, found only in peripheral nervous system Schwann cells.

The protein resides in the cell membrane. Functionally, is an adhesion molecule necessary for normal myelination in the peripheral nervous system. It mediates adhesion between adjacent myelin wraps and ultimately drives myelin compaction. This Bos taurus (Bovine) protein is Myelin protein P0 (MPZ).